The following is a 164-amino-acid chain: MDLFVFFALIWPPYVANGSAVLASRLKWRHPVDFGHNFVDGRRLFGDGKTYEGLAIGVVLGTVVGYLPNLLHPTLTLLDALILSVAALLGDLLGAFIKRRLCMPRGHPAFPLDQLDFILMAMLVRSLYADVPVEYIIAASVVTPIIHRATNIAAYILRLKKEPW.

The next 4 helical transmembrane spans lie at 3–23, 53–73, 77–97, and 126–146; these read LFVF…AVLA, GLAI…LLHP, LLDA…GAFI, and SLYA…TPII.

This sequence belongs to the CDP-archaeol synthase family. Mg(2+) serves as cofactor.

It is found in the cell membrane. The enzyme catalyses 2,3-bis-O-(geranylgeranyl)-sn-glycerol 1-phosphate + CTP + H(+) = CDP-2,3-bis-O-(geranylgeranyl)-sn-glycerol + diphosphate. The protein operates within membrane lipid metabolism; glycerophospholipid metabolism. In terms of biological role, catalyzes the formation of CDP-2,3-bis-(O-geranylgeranyl)-sn-glycerol (CDP-archaeol) from 2,3-bis-(O-geranylgeranyl)-sn-glycerol 1-phosphate (DGGGP) and CTP. This reaction is the third ether-bond-formation step in the biosynthesis of archaeal membrane lipids. The polypeptide is CDP-archaeol synthase (Pyrobaculum arsenaticum (strain DSM 13514 / JCM 11321 / PZ6)).